A 404-amino-acid polypeptide reads, in one-letter code: NADH-quinone oxidoreductase subunit D 2 (404 aa).

This sequence belongs to the complex I 49 kDa subunit family. As to quaternary structure, NDH-1 is composed of 14 different subunits. Subunits NuoB, C, D, E, F, and G constitute the peripheral sector of the complex.

The protein resides in the cell inner membrane. The catalysed reaction is a quinone + NADH + 5 H(+)(in) = a quinol + NAD(+) + 4 H(+)(out). Its function is as follows. NDH-1 shuttles electrons from NADH, via FMN and iron-sulfur (Fe-S) centers, to quinones in the respiratory chain. The immediate electron acceptor for the enzyme in this species is believed to be ubiquinone. Couples the redox reaction to proton translocation (for every two electrons transferred, four hydrogen ions are translocated across the cytoplasmic membrane), and thus conserves the redox energy in a proton gradient. The polypeptide is NADH-quinone oxidoreductase subunit D 2 (Rhizobium etli (strain ATCC 51251 / DSM 11541 / JCM 21823 / NBRC 15573 / CFN 42)).